A 456-amino-acid polypeptide reads, in one-letter code: Chromosomal replication initiator protein DnaA (456 aa).

The segment at 1-83 is domain I, interacts with DnaA modulators; it reads MTASLWQQCL…LRFDIGNRPH (83 aa). A domain II region spans residues 83–119; sequence HPVAIARAPARGAAPVNNLQKSWESKADAKPEPNHKS. A domain III, AAA+ region region spans residues 120 to 336; that stretch reads NTNVNYTFEN…GALNRVIANA (217 aa). The ATP site is built by glycine 164, glycine 166, lysine 167, and threonine 168. A domain IV, binds dsDNA region spans residues 337–456; that stretch reads NFTGRAINID…YSNLIRTLSS (120 aa).

Belongs to the DnaA family. Oligomerizes as a right-handed, spiral filament on DNA at oriC.

It is found in the cytoplasm. Functionally, plays an essential role in the initiation and regulation of chromosomal replication. ATP-DnaA binds to the origin of replication (oriC) to initiate formation of the DNA replication initiation complex once per cell cycle. Binds the DnaA box (a 9 base pair repeat at the origin) and separates the double-stranded (ds)DNA. Forms a right-handed helical filament on oriC DNA; dsDNA binds to the exterior of the filament while single-stranded (ss)DNA is stabiized in the filament's interior. The ATP-DnaA-oriC complex binds and stabilizes one strand of the AT-rich DNA unwinding element (DUE), permitting loading of DNA polymerase. After initiation quickly degrades to an ADP-DnaA complex that is not apt for DNA replication. Binds acidic phospholipids. The chain is Chromosomal replication initiator protein DnaA from Aeromonas salmonicida (strain A449).